The primary structure comprises 315 residues: Cytochrome f (315 aa).

The N-terminal stretch at 1 to 36 (MKQSLLSVLTKKSLRLLAALFLVVTSVFSLPQAAQA) is a signal peptide. 4 residues coordinate heme: Phe-37, Cys-57, Cys-60, and His-61. Residues 281-301 (IKWLMVFFSAIMISQTLLVLK) form a helical membrane-spanning segment.

Belongs to the cytochrome f family. As to quaternary structure, the 4 large subunits of the cytochrome b6-f complex are cytochrome b6, subunit IV (17 kDa polypeptide, PetD), cytochrome f and the Rieske protein, while the 4 small subunits are PetG, PetL, PetM and PetN. The complex functions as a dimer. It depends on heme as a cofactor.

It localises to the cellular thylakoid membrane. In terms of biological role, component of the cytochrome b6-f complex, which mediates electron transfer between photosystem II (PSII) and photosystem I (PSI), cyclic electron flow around PSI, and state transitions. The polypeptide is Cytochrome f (Acaryochloris marina (strain MBIC 11017)).